Reading from the N-terminus, the 974-residue chain is UvrABC system protein A (974 aa).

34–41 is a binding site for ATP; the sequence is GLSGSGKS. ABC transporter domains lie at 331–610 and 630–959; these read WARS…TNSL and ISKT…QFLK. Position 663 to 670 (663 to 670) interacts with ATP; it reads GVSGGGKS. A C4-type zinc finger spans residues 762 to 788; it reads CEACQGDGVIKIEMHFLPDVYVTCDVC.

This sequence belongs to the ABC transporter superfamily. UvrA family. As to quaternary structure, forms a heterotetramer with UvrB during the search for lesions.

The protein resides in the cytoplasm. In terms of biological role, the UvrABC repair system catalyzes the recognition and processing of DNA lesions. UvrA is an ATPase and a DNA-binding protein. A damage recognition complex composed of 2 UvrA and 2 UvrB subunits scans DNA for abnormalities. When the presence of a lesion has been verified by UvrB, the UvrA molecules dissociate. This Brucella abortus (strain 2308) protein is UvrABC system protein A.